Here is a 206-residue protein sequence, read N- to C-terminus: Large ribosomal subunit protein uL4 (206 aa).

Positions 65 to 76 (KQKGTGRARHSS) are enriched in basic residues. The interval 65–94 (KQKGTGRARHSSARAPQFRGGGKAHGPVVR) is disordered.

The protein belongs to the universal ribosomal protein uL4 family. As to quaternary structure, part of the 50S ribosomal subunit.

In terms of biological role, one of the primary rRNA binding proteins, this protein initially binds near the 5'-end of the 23S rRNA. It is important during the early stages of 50S assembly. It makes multiple contacts with different domains of the 23S rRNA in the assembled 50S subunit and ribosome. Forms part of the polypeptide exit tunnel. The chain is Large ribosomal subunit protein uL4 from Bartonella quintana (strain Toulouse) (Rochalimaea quintana).